Here is a 339-residue protein sequence, read N- to C-terminus: Leucine-rich repeat-containing protein 59 (339 aa).

The Cytoplasmic segment spans residues methionine 1–arginine 282. LRR repeat units follow at residues serine 10 to proline 31, lysine 40 to leucine 61, histidine 63 to leucine 84, and serine 86 to leucine 107. Positions methionine 181–threonine 254 form a coiled coil. Residues serine 186–serine 275 form a disordered region. A compositionally biased stretch (basic and acidic residues) spans glutamate 187–glutamine 256. A helical membrane pass occupies residues alanine 283–leucine 300. Over threonine 301–glutamine 339 the chain is Lumenal.

As to quaternary structure, interacts with SGO1.

The protein resides in the microsome membrane. Its subcellular location is the endoplasmic reticulum membrane. It localises to the nucleus envelope. Required for nuclear import of FGF1. This Gallus gallus (Chicken) protein is Leucine-rich repeat-containing protein 59 (LRRC59).